The chain runs to 379 residues: Dihydroorotate dehydrogenase (quinone) (379 aa).

Residues 79 to 83 (AGCDK) and A103 contribute to the FMN site. Residue K83 participates in substrate binding. 128–131 (NRLG) lines the substrate pocket. Residues N160 and N193 each contribute to the FMN site. N193 contacts substrate. The Nucleophile role is filled by S196. Residue N198 participates in substrate binding. Residues K231 and T259 each contribute to the FMN site. Substrate is bound at residue 260–261 (NT). Residues G289, G318, and 339–340 (YT) contribute to the FMN site.

Belongs to the dihydroorotate dehydrogenase family. Type 2 subfamily. In terms of assembly, monomer. FMN is required as a cofactor.

It localises to the cell membrane. The catalysed reaction is (S)-dihydroorotate + a quinone = orotate + a quinol. It participates in pyrimidine metabolism; UMP biosynthesis via de novo pathway; orotate from (S)-dihydroorotate (quinone route): step 1/1. Its function is as follows. Catalyzes the conversion of dihydroorotate to orotate with quinone as electron acceptor. This is Dihydroorotate dehydrogenase (quinone) from Crocosphaera subtropica (strain ATCC 51142 / BH68) (Cyanothece sp. (strain ATCC 51142)).